Reading from the N-terminus, the 245-residue chain is MASLGVNIDHIANVREARKTFEPDPVKMVLLAELGGADGITVHLREDRRHIQDRDLNLLKETVHTRLNLEMAATEEMTSIALNLKPDIVTLVPEKREEVTTEGGLDVIKNKRKLKEIIQRLSGEDIPVSLFVDPVQAQLENCAEVKAAWVELHTGKYAITKKKARDLELSILKESTAKAKSYGLRVNAGHGLTYQNVEPIAAIEGIEELNIGHTIISRALSVGLSQAVKEMKSLIINPRKDNFLL.

Residue asparagine 7 coordinates 3-amino-2-oxopropyl phosphate. 1-deoxy-D-xylulose 5-phosphate is bound at residue aspartate 9 to histidine 10. Residue arginine 18 coordinates 3-amino-2-oxopropyl phosphate. Histidine 43 serves as the catalytic Proton acceptor. 2 residues coordinate 1-deoxy-D-xylulose 5-phosphate: arginine 45 and histidine 50. The Proton acceptor role is filled by glutamate 70. Position 100 (threonine 100) interacts with 1-deoxy-D-xylulose 5-phosphate. The Proton donor role is filled by histidine 190. 3-amino-2-oxopropyl phosphate contacts are provided by residues glycine 191 and glycine 212 to histidine 213.

Belongs to the PNP synthase family. Homooctamer; tetramer of dimers.

It is found in the cytoplasm. It catalyses the reaction 3-amino-2-oxopropyl phosphate + 1-deoxy-D-xylulose 5-phosphate = pyridoxine 5'-phosphate + phosphate + 2 H2O + H(+). It functions in the pathway cofactor biosynthesis; pyridoxine 5'-phosphate biosynthesis; pyridoxine 5'-phosphate from D-erythrose 4-phosphate: step 5/5. Catalyzes the complicated ring closure reaction between the two acyclic compounds 1-deoxy-D-xylulose-5-phosphate (DXP) and 3-amino-2-oxopropyl phosphate (1-amino-acetone-3-phosphate or AAP) to form pyridoxine 5'-phosphate (PNP) and inorganic phosphate. The protein is Pyridoxine 5'-phosphate synthase of Prochlorococcus marinus (strain NATL2A).